Here is a 290-residue protein sequence, read N- to C-terminus: MRSLHILLVITASLLASLAVSAEADPSTRTANVVENNKDKSRFLRDGGTTEAQTDEERATITLGDKVVSDKAATKDLLERLLALGTPLKTVQKEFLNMPLIKTFAELSKHPNWRALDKYERMQWQKLNEGQTLTYMRVGDRSYSKEKAQEQLLRWVAQKKTVKSVYDDLQIEGFARNTDAARLNWRAYNMYDKWFTAASQMQRNPQQYAKFGTGYHSEQKTTEVFEKWAMEGTHIKSVIKTLNLNNKSASEMANNENFPALLKYVKLYLDFKPFRDLNAKSRLQARRPIS.

Residues 1-24 (MRSLHILLVITASLLASLAVSAEA) form the signal peptide. Residues 33 to 56 (VVENNKDKSRFLRDGGTTEAQTDE) form a disordered region. Residues 36–45 (NNKDKSRFLR) are compositionally biased toward basic and acidic residues. The RxLR-dEER motif lies at 42–58 (RFLRDGGTTEAQTDEER). Residues 118–141 (KYERMQWQKLNEGQTLTYMRVGDR) are W1 motif. The tract at residues 151–174 (QLLRWVAQKKTVKSVYDDLQIEGF) is W2 motif. Residues 224–247 (VFEKWAMEGTHIKSVIKTLNLNNK) are W3 motif. N-linked (GlcNAc...) asparagine glycosylation occurs at Asn-246. Residues 249 to 270 (ASEMANNENFPALLKYVKLYLD) form a y motif region.

It belongs to the RxLR effector family.

The protein resides in the secreted. It localises to the host cytoplasm. The protein localises to the host nucleus. Its subcellular location is the host nucleolus. It is found in the host cytoskeleton. Secreted effector that acts as an elicitor of hypersensitive response (HR) specifically on plants carrying defense protein R4, through its interaction with this protein. In Phytophthora mirabilis, this protein is RxLR effector protein Avr4.